A 969-amino-acid chain; its full sequence is Leucine--tRNA ligase (969 aa).

The 'HIGH' region signature appears at 45-55 (PYTNAPLHIGH). A 'KMSKS' region motif is present at residues 649–653 (KMSKS). Residue Lys652 coordinates ATP.

It belongs to the class-I aminoacyl-tRNA synthetase family.

Its subcellular location is the cytoplasm. The enzyme catalyses tRNA(Leu) + L-leucine + ATP = L-leucyl-tRNA(Leu) + AMP + diphosphate. The sequence is that of Leucine--tRNA ligase from Staphylothermus marinus (strain ATCC 43588 / DSM 3639 / JCM 9404 / F1).